Reading from the N-terminus, the 140-residue chain is Protein archease (140 aa).

Positions 12, 139, and 140 each coordinate Ca(2+).

The protein belongs to the archease family.

Activates the tRNA-splicing ligase complex by facilitating the enzymatic turnover of catalytic subunit RtcB. Acts by promoting the guanylylation of RtcB, a key intermediate step in tRNA ligation. Can also alter the NTP specificity of RtcB such that ATP, dGTP or ITP is used efficiently. May also act as a chaperone or modulator of proteins involved in DNA or RNA processing. The polypeptide is Protein archease (Methanothermobacter thermautotrophicus (strain ATCC 29096 / DSM 1053 / JCM 10044 / NBRC 100330 / Delta H) (Methanobacterium thermoautotrophicum)).